We begin with the raw amino-acid sequence, 484 residues long: MLHQLTLAEIARALADKQFSAEELTRTLLGRIRQLDPQLNSFISITDDLAIAQAKAADERRANGENGALLGAPIAHKDLFCTQGVRTSCGSKMLDNFVSPYDATVVEKLAAAGAVTLGKLNMDEFAMGSSNQSSHYGAVNNPWSLDRVPGGSSGGSAAAVAARLLPAATGTDTGGSIRQPAALTNLTGIKPTYGRVSRWGMIAYASSLDQGGPLARTAEDCALMLGVMAGFDPKDSTSVEQPVDDYLAALQKPLSGLRIGLPREYFGAGLDSRIADAVLAVVEELKTLGATVKDISLPNMQHAIPAYYVIAPAEASSNLSRFDGVRYGYRCDAPQNLEDLYKRSRAEGFGSEVKNRIMVGTYALSAGYYDAYYLQAQKIRRLIKNDFVSAFAEVDVILGPTTPNPAWKIGEKNDDPVSQYLEDIYTITANLAGLPGLSMPAGFVDGLPVGVQLLAPYFQEGRLLNVAHQYQQVSDWHTRTPAGF.

Catalysis depends on charge relay system residues Lys-77 and Ser-152. Residue Ser-176 is the Acyl-ester intermediate of the active site.

Belongs to the amidase family. GatA subfamily. Heterotrimer of A, B and C subunits.

The catalysed reaction is L-glutamyl-tRNA(Gln) + L-glutamine + ATP + H2O = L-glutaminyl-tRNA(Gln) + L-glutamate + ADP + phosphate + H(+). Its function is as follows. Allows the formation of correctly charged Gln-tRNA(Gln) through the transamidation of misacylated Glu-tRNA(Gln) in organisms which lack glutaminyl-tRNA synthetase. The reaction takes place in the presence of glutamine and ATP through an activated gamma-phospho-Glu-tRNA(Gln). This chain is Glutamyl-tRNA(Gln) amidotransferase subunit A, found in Pseudomonas aeruginosa (strain LESB58).